We begin with the raw amino-acid sequence, 350 residues long: GTPase Obg (350 aa).

The region spanning 1-158 (MFIDSVKITL…RLVRLELKLI (158 aa)) is the Obg domain. One can recognise an OBG-type G domain in the interval 159–339 (ADVGLVGFPN…LKFMLLEEIK (181 aa)). GTP is bound by residues 165 to 172 (GFPNVGKS), 190 to 194 (FTTLT), 212 to 215 (DIPG), 280 to 283 (SKSD), and 320 to 322 (SSL). 2 residues coordinate Mg(2+): Ser172 and Thr192.

It belongs to the TRAFAC class OBG-HflX-like GTPase superfamily. OBG GTPase family. As to quaternary structure, monomer. It depends on Mg(2+) as a cofactor.

It is found in the cytoplasm. Its function is as follows. An essential GTPase which binds GTP, GDP and possibly (p)ppGpp with moderate affinity, with high nucleotide exchange rates and a fairly low GTP hydrolysis rate. Plays a role in control of the cell cycle, stress response, ribosome biogenesis and in those bacteria that undergo differentiation, in morphogenesis control. The sequence is that of GTPase Obg from Campylobacter jejuni (strain RM1221).